Consider the following 496-residue polypeptide: Probable fatty acyl-CoA reductase 5 (496 aa).

Belongs to the fatty acyl-CoA reductase family. As to expression, expressed in the endodermal cell layer surrounding the central vasculature in roots. Expressed in floral organs of very young unopened buds and receptacle of siliques.

The catalysed reaction is a long-chain fatty acyl-CoA + 2 NADPH + 2 H(+) = a long-chain primary fatty alcohol + 2 NADP(+) + CoA. In terms of biological role, catalyzes the reduction of fatty acyl-CoA to fatty alcohols. Catalyzes specifically the formation of C18:0 fatty alcohol. Provides the fatty alcohols required for synthesis of suberin in roots, seed coat and wound-induced leaf tissue. Provides the fatty alcohols required for synthesis of alkyl hydroxycinnamates in root waxes. This Arabidopsis thaliana (Mouse-ear cress) protein is Probable fatty acyl-CoA reductase 5.